A 50-amino-acid chain; its full sequence is Sperm protamine P1 (50 aa).

This sequence belongs to the protamine P1 family. In terms of tissue distribution, testis.

The protein localises to the nucleus. It is found in the chromosome. Protamines substitute for histones in the chromatin of sperm during the haploid phase of spermatogenesis. They compact sperm DNA into a highly condensed, stable and inactive complex. In Natalus stramineus (Mexican funnel-eared bat), this protein is Sperm protamine P1 (PRM1).